Here is a 244-residue protein sequence, read N- to C-terminus: Small ribosomal subunit protein eS6 (244 aa).

Residues 185–244 (RLQRKRHMRAVKRRRYAKQREEEATYAKLLAKRKKEEREAHAKRRSSARESSLRESKSKA) form a disordered region. The segment covering 186-201 (LQRKRHMRAVKRRRYA) has biased composition (basic residues). The span at 231-244 (SARESSLRESKSKA) shows a compositional bias: basic and acidic residues.

This sequence belongs to the eukaryotic ribosomal protein eS6 family. In terms of processing, ribosomal protein S6 is the major substrate of protein kinases in eukaryote ribosomes.

Functionally, component of the 40S small ribosomal subunit. Plays an important role in controlling cell growth and proliferation through the selective translation of particular classes of mRNA. This is Small ribosomal subunit protein eS6 (RPS6) from Branchiostoma floridae (Florida lancelet).